The following is a 395-amino-acid chain: Vacuolar protease A (395 aa).

The N-terminal stretch at 1–18 is a signal peptide; that stretch reads MKGSLLLAGATLLGCTSA. A propeptide spans 19-72 (activation peptide); it reads KLHSLKLKKVSLKEQLEHADIDVQIKSLGQKYMGIRPGQHEQQMFKEQTPIEAE. The 306-residue stretch at 87–392 folds into the Peptidase A1 domain; that stretch reads YFSEISIGTP…DLGKGTVGLA (306 aa). The active site involves Asp105. Cys118 and Cys123 are joined by a disulfide. Residue Asn140 is glycosylated (N-linked (GlcNAc...) asparagine). The active site involves Asp289. Cys318 and Cys351 are oxidised to a cystine. An N-linked (GlcNAc...) asparagine glycan is attached at Asn335.

Belongs to the peptidase A1 family.

The protein resides in the vacuole lumen. Its subcellular location is the secreted. It carries out the reaction Hydrolysis of proteins with broad specificity for peptide bonds. Cleaves -Leu-Leu-|-Val-Tyr- bond in a synthetic substrate. Does not act on esters of Tyr or Arg.. Vacuolar aspartic endopeptidase which is probably also secreted and contributes to virulence. This Arthroderma otae (strain ATCC MYA-4605 / CBS 113480) (Microsporum canis) protein is Vacuolar protease A (PEP2).